Consider the following 617-residue polypeptide: Proline--tRNA ligase (617 aa).

It belongs to the class-II aminoacyl-tRNA synthetase family. ProS type 1 subfamily. Homodimer.

It is found in the cytoplasm. The enzyme catalyses tRNA(Pro) + L-proline + ATP = L-prolyl-tRNA(Pro) + AMP + diphosphate. In terms of biological role, catalyzes the attachment of proline to tRNA(Pro) in a two-step reaction: proline is first activated by ATP to form Pro-AMP and then transferred to the acceptor end of tRNA(Pro). As ProRS can inadvertently accommodate and process non-cognate amino acids such as alanine and cysteine, to avoid such errors it has two additional distinct editing activities against alanine. One activity is designated as 'pretransfer' editing and involves the tRNA(Pro)-independent hydrolysis of activated Ala-AMP. The other activity is designated 'posttransfer' editing and involves deacylation of mischarged Ala-tRNA(Pro). The misacylated Cys-tRNA(Pro) is not edited by ProRS. The polypeptide is Proline--tRNA ligase (Streptococcus agalactiae serotype III (strain NEM316)).